A 78-amino-acid polypeptide reads, in one-letter code: MAASKLMQEIHSIGDRLLLKLQRLPQAEPVEILAFSVLVVFTATVVLLLLIACGFCCCQYCWPRRRGRRTQVGPMTPP.

A helical transmembrane segment spans residues 32 to 52 (ILAFSVLVVFTATVVLLLLIA).

Its subcellular location is the membrane. This chain is Small integral membrane protein 5 (SMIM5), found in Bos taurus (Bovine).